Consider the following 337-residue polypeptide: ERI1 exoribonuclease 3 (337 aa).

The Exonuclease domain occupies 146 to 320 (FLVLDFEATC…DDCKNIANIM (175 aa)). 3 residues coordinate Mg(2+): Asp150, Glu152, and Asp249. Glu152 (proton acceptor) is an active-site residue. Glu152 contacts AMP. His307 (proton acceptor) is an active-site residue. His307 contacts AMP. Position 312 (Asp312) interacts with Mg(2+).

In terms of assembly, interacts with PRNP. Requires Mg(2+) as cofactor.

The sequence is that of ERI1 exoribonuclease 3 (ERI3) from Homo sapiens (Human).